The chain runs to 227 residues: Cytidylate kinase (227 aa).

An ATP-binding site is contributed by glycine 10–threonine 18.

This sequence belongs to the cytidylate kinase family. Type 1 subfamily.

The protein localises to the cytoplasm. The catalysed reaction is CMP + ATP = CDP + ADP. It catalyses the reaction dCMP + ATP = dCDP + ADP. The sequence is that of Cytidylate kinase from Acinetobacter baylyi (strain ATCC 33305 / BD413 / ADP1).